Consider the following 77-residue polypeptide: Epoxide hydrolase (77 aa).

In terms of assembly, monomer.

The catalysed reaction is an epoxide + H2O = an ethanediol. In terms of biological role, this enzyme acts on aliphatic epoxides. Its substrates include epichlorohydrin, epibromohydrin, epoxyoctane and styrene epoxide. In Pseudomonas sp. (strain AD1), this protein is Epoxide hydrolase.